A 57-amino-acid polypeptide reads, in one-letter code: uncharacterized protein (57 aa).

A helical transmembrane segment spans residues 10–27 (FGLLWLIIGSEAFHLNAL). Residues 28–55 (KQDHLERMKQYDAKIRLAKHEFDDTSNE) are a coiled coil.

It localises to the membrane. This is an uncharacterized protein from Schizosaccharomyces pombe (strain 972 / ATCC 24843) (Fission yeast).